We begin with the raw amino-acid sequence, 223 residues long: Guanylate kinase (223 aa).

In terms of domain architecture, Guanylate kinase-like spans 6-183; that stretch reads GRLFVMTGAS…AVADFLAILT (178 aa). 13 to 20 is an ATP binding site; the sequence is GASGVGKG.

It belongs to the guanylate kinase family.

The protein resides in the cytoplasm. It catalyses the reaction GMP + ATP = GDP + ADP. In terms of biological role, essential for recycling GMP and indirectly, cGMP. In Thermus thermophilus (strain ATCC 27634 / DSM 579 / HB8), this protein is Guanylate kinase.